We begin with the raw amino-acid sequence, 364 residues long: Sec-independent protein translocase protein TatC (364 aa).

7 helical membrane passes run Ile42–Phe62, Met107–Thr127, Leu139–Thr159, Leu160–Asp180, Ile194–Val214, Pro225–Thr245, and Met246–Leu266. Positions Thr277–Thr364 are disordered. Residues Asp282–Asp295 show a composition bias toward acidic residues. The span at Ala301 to Gly320 shows a compositional bias: low complexity. Residues Pro324 to Pro344 are compositionally biased toward polar residues.

It belongs to the TatC family. In terms of assembly, the Tat system comprises two distinct complexes: a TatABC complex, containing multiple copies of TatA, TatB and TatC subunits, and a separate TatA complex, containing only TatA subunits. Substrates initially bind to the TatABC complex, which probably triggers association of the separate TatA complex to form the active translocon.

It is found in the cell membrane. Functionally, part of the twin-arginine translocation (Tat) system that transports large folded proteins containing a characteristic twin-arginine motif in their signal peptide across membranes. Together with TatB, TatC is part of a receptor directly interacting with Tat signal peptides. In Frankia casuarinae (strain DSM 45818 / CECT 9043 / HFP020203 / CcI3), this protein is Sec-independent protein translocase protein TatC.